We begin with the raw amino-acid sequence, 603 residues long: Insulin-like growth factor-binding protein complex acid labile subunit (603 aa).

An N-terminal signal peptide occupies residues 1–23 (MALRTGGPALVVLLAFWVALGPC). In terms of domain architecture, LRRNT spans 32 to 74 (ASADAEGPQCPVACTCSHDDYTDELSVFCSSKNLTHLPDDIPV). Disulfide bonds link Cys41/Cys47 and Cys45/Cys60. 3 N-linked (GlcNAc...) asparagine glycosylation sites follow: Asn64, Asn85, and Asn96. 19 LRR repeats span residues 75 to 96 (STRALWLDGNNLSSIPSAAFQN), 99 to 120 (SLDFLNLQGSWLRSLEPQALLG), 123 to 144 (NLYYLHLERNRLRNLAVGLFTH), 147 to 168 (SLASLSLSSNLLGRLEEGLFQG), 171 to 192 (HLWDLNLGWNSLVVLPDTVFQG), 195 to 216 (NLHELVLAGNKLTYLQPALFCG), 219 to 240 (ELRELDLSRNALRSVKANVFVH), 243 to 264 (RLQKLYLDRNLITAVAPGAFLG), 267 to 288 (ALRWLDLSHNRVAGLMEDTFPG), 291 to 312 (GLHVLRLAHNAIASLRPRTFKD), 315 to 336 (FLEELQLGHNRIRQLGERTFEG), 339 to 360 (QLEVLTLNDNQITEVRVGAFSG), 363 to 384 (NVAVMNLSGNCLRSLPERVFQG), 387 to 408 (KLHSLHLEHSCLGHVRLHTFAG), 411 to 432 (GLRRLFLRDNSISSIEEQSLAG), 435 to 456 (ELLELDLTTNRLTHLPRQLFQG), 459 to 480 (HLEYLLLSYNQLTTLSAEVLGP), 483 to 504 (RAFWLDISHNHLETLAEGLFSS), and 507 to 528 (RVRYLSLRNNSLQTFSPQPGLE). An N-linked (GlcNAc...) asparagine glycan is attached at Asn368. Residue Asn515 is glycosylated (N-linked (GlcNAc...) asparagine). Positions 535–603 (NPWDCSCPLK…DVSETHFVHC (69 aa)) constitute an LRRCT domain. 3 cysteine pairs are disulfide-bonded: Cys539–Cys581, Cys541–Cys603, and Cys565–Cys570. N-linked (GlcNAc...) asparagine glycans are attached at residues Asn578 and Asn586.

As to quaternary structure, forms a ternary complex with IGF1 and IGFBP3. In terms of tissue distribution, brain, kidney, lung, heart, spleen, muscle and liver.

The protein localises to the secreted. It is found in the extracellular space. May have an important role in regulating the access of circulating IGFs to the tissues. The chain is Insulin-like growth factor-binding protein complex acid labile subunit (Igfals) from Rattus norvegicus (Rat).